We begin with the raw amino-acid sequence, 296 residues long: Phosphoribosylaminoimidazole-succinocarboxamide synthase (296 aa).

The protein belongs to the SAICAR synthetase family.

The enzyme catalyses 5-amino-1-(5-phospho-D-ribosyl)imidazole-4-carboxylate + L-aspartate + ATP = (2S)-2-[5-amino-1-(5-phospho-beta-D-ribosyl)imidazole-4-carboxamido]succinate + ADP + phosphate + 2 H(+). It participates in purine metabolism; IMP biosynthesis via de novo pathway; 5-amino-1-(5-phospho-D-ribosyl)imidazole-4-carboxamide from 5-amino-1-(5-phospho-D-ribosyl)imidazole-4-carboxylate: step 1/2. This chain is Phosphoribosylaminoimidazole-succinocarboxamide synthase, found in Geotalea uraniireducens (strain Rf4) (Geobacter uraniireducens).